Here is a 255-residue protein sequence, read N- to C-terminus: MAAFASALRVLPSPPAAVPRRLRSREQRQGCRSRRYSKVVAYYALTTPPYKLDALEPYISKRTVELHWGKHQQDYVDSLNKQLATSMFYGYTLEELIKEAYNNGNPLPEYNNAAQVWNHHFFWESMQPEGGGSPGRGVLQQIEKDFGSFTNFREEFIRSALSLLGSGWVWLVLKRKERKFSVVHTQNAISPLALGDIPLINLDLWEHAYYLDYKDDRRMYVTNFIDHLVSWDTVTLRMMRAEAFVNLGEPNIPVA.

The N-terminal 32 residues, 1–32, are a transit peptide targeting the chloroplast; sequence MAAFASALRVLPSPPAAVPRRLRSREQRQGCR. Residues histidine 67, histidine 119, aspartate 203, and histidine 207 each coordinate Fe cation.

This sequence belongs to the iron/manganese superoxide dismutase family. As to quaternary structure, homodimer. Fe cation is required as a cofactor. Strongly expressed in the stems of the young seedlings, etiolated seedlings and embryogenic calli, but only minimally expressed in the leaves and the roots.

Its subcellular location is the plastid. The protein localises to the chloroplast. The catalysed reaction is 2 superoxide + 2 H(+) = H2O2 + O2. Functionally, destroys superoxide anion radicals which are normally produced within the cells and which are toxic to biological systems. This is Superoxide dismutase [Fe] 2, chloroplastic from Oryza sativa subsp. japonica (Rice).